Here is a 554-residue protein sequence, read N- to C-terminus: Dihydroxy-acid dehydratase (554 aa).

Asp78 lines the Mg(2+) pocket. Cys119 lines the [2Fe-2S] cluster pocket. Mg(2+) contacts are provided by Asp120 and Lys121. Lys121 is modified (N6-carboxylysine). Residue Cys191 participates in [2Fe-2S] cluster binding. Position 442 (Glu442) interacts with Mg(2+). Catalysis depends on Ser468, which acts as the Proton acceptor.

Belongs to the IlvD/Edd family. As to quaternary structure, homodimer. It depends on [2Fe-2S] cluster as a cofactor. Requires Mg(2+) as cofactor.

The enzyme catalyses (2R)-2,3-dihydroxy-3-methylbutanoate = 3-methyl-2-oxobutanoate + H2O. It catalyses the reaction (2R,3R)-2,3-dihydroxy-3-methylpentanoate = (S)-3-methyl-2-oxopentanoate + H2O. The protein operates within amino-acid biosynthesis; L-isoleucine biosynthesis; L-isoleucine from 2-oxobutanoate: step 3/4. It participates in amino-acid biosynthesis; L-valine biosynthesis; L-valine from pyruvate: step 3/4. Functions in the biosynthesis of branched-chain amino acids. Catalyzes the dehydration of (2R,3R)-2,3-dihydroxy-3-methylpentanoate (2,3-dihydroxy-3-methylvalerate) into 2-oxo-3-methylpentanoate (2-oxo-3-methylvalerate) and of (2R)-2,3-dihydroxy-3-methylbutanoate (2,3-dihydroxyisovalerate) into 2-oxo-3-methylbutanoate (2-oxoisovalerate), the penultimate precursor to L-isoleucine and L-valine, respectively. This chain is Dihydroxy-acid dehydratase, found in Hydrogenobaculum sp. (strain Y04AAS1).